The primary structure comprises 399 residues: Tryptophan synthase beta chain (399 aa).

At K92 the chain carries N6-(pyridoxal phosphate)lysine.

It belongs to the TrpB family. In terms of assembly, tetramer of two alpha and two beta chains. Pyridoxal 5'-phosphate is required as a cofactor.

The enzyme catalyses (1S,2R)-1-C-(indol-3-yl)glycerol 3-phosphate + L-serine = D-glyceraldehyde 3-phosphate + L-tryptophan + H2O. The protein operates within amino-acid biosynthesis; L-tryptophan biosynthesis; L-tryptophan from chorismate: step 5/5. Functionally, the beta subunit is responsible for the synthesis of L-tryptophan from indole and L-serine. The chain is Tryptophan synthase beta chain from Nitrosomonas eutropha (strain DSM 101675 / C91 / Nm57).